The chain runs to 737 residues: Autophagy-related protein 22 (737 aa).

The tract at residues 115–154 (RMSPANAGDNSDSYPYGDDTDGDSSSGLPPPRYPGDDTRP) is disordered. Low complexity predominate over residues 125–141 (SDSYPYGDDTDGDSSSG). 4 helical membrane passes run 166–186 (YAFA…PILL), 232–252 (SFAM…VVSI), 264–284 (KLLL…IFIS), and 289–309 (LIGA…FVLL). The segment at 327–353 (GDYGSPGYATTEEGDDEDDEYQEDSTR) is disordered. The segment covering 338–349 (EEGDDEDDEYQE) has biased composition (acidic residues). Residue Asn354 is glycosylated (N-linked (GlcNAc...) asparagine). Residues 395 to 415 (GIGIGYIAGLFLQCVAIAILI) traverse the membrane as a helical segment. Asn419 is a glycosylation site (N-linked (GlcNAc...) asparagine). Transmembrane regions (helical) follow at residues 426 to 446 (IVLC…AMWL), 487 to 507 (LVDI…IATT), 524 to 544 (WALG…AFSW), 559 to 579 (ILAC…GYLP), 593 to 613 (WEMY…SGYC), 632 to 652 (LYAI…GAII), and 661 to 681 (AFWF…FINV).

Belongs to the ATG22 family.

Its subcellular location is the vacuole membrane. Its function is as follows. Vacuolar effluxer which mediate the efflux of amino acids resulting from autophagic degradation. The release of autophagic amino acids allows the maintenance of protein synthesis and viability during nitrogen starvation. The chain is Autophagy-related protein 22 (apg-11) from Neurospora crassa (strain ATCC 24698 / 74-OR23-1A / CBS 708.71 / DSM 1257 / FGSC 987).